The chain runs to 301 residues: Small ribosomal subunit protein uS2 (301 aa).

The disordered stretch occupies residues 282-301 (VRKQPVSENENVEAAAAEQK). Residues 289 to 301 (ENENVEAAAAEQK) are compositionally biased toward low complexity.

Belongs to the universal ribosomal protein uS2 family.

This is Small ribosomal subunit protein uS2 from Koribacter versatilis (strain Ellin345).